A 433-amino-acid chain; its full sequence is Serine hydroxymethyltransferase (433 aa).

(6S)-5,6,7,8-tetrahydrofolate contacts are provided by residues leucine 132 and 136 to 138 (GHL). Lysine 241 carries the post-translational modification N6-(pyridoxal phosphate)lysine.

This sequence belongs to the SHMT family. Homodimer. The cofactor is pyridoxal 5'-phosphate.

It localises to the cytoplasm. It carries out the reaction (6R)-5,10-methylene-5,6,7,8-tetrahydrofolate + glycine + H2O = (6S)-5,6,7,8-tetrahydrofolate + L-serine. Its pathway is one-carbon metabolism; tetrahydrofolate interconversion. It functions in the pathway amino-acid biosynthesis; glycine biosynthesis; glycine from L-serine: step 1/1. In terms of biological role, catalyzes the reversible interconversion of serine and glycine with tetrahydrofolate (THF) serving as the one-carbon carrier. This reaction serves as the major source of one-carbon groups required for the biosynthesis of purines, thymidylate, methionine, and other important biomolecules. Also exhibits THF-independent aldolase activity toward beta-hydroxyamino acids, producing glycine and aldehydes, via a retro-aldol mechanism. This chain is Serine hydroxymethyltransferase, found in Afipia carboxidovorans (strain ATCC 49405 / DSM 1227 / KCTC 32145 / OM5) (Oligotropha carboxidovorans).